Reading from the N-terminus, the 46-residue chain is Probable butyrate kinase (46 aa).

Belongs to the acetokinase family.

The protein localises to the cytoplasm. The catalysed reaction is butanoate + ATP = butanoyl phosphate + ADP. The chain is Probable butyrate kinase (buk) from Geobacillus stearothermophilus (Bacillus stearothermophilus).